The chain runs to 525 residues: Zinc finger protein 678 (525 aa).

14 consecutive C2H2-type zinc fingers follow at residues 97–119, 125–147, 153–175, 181–203, 209–231, 237–259, 265–287, 293–315, 321–343, 349–371, 377–399, 405–427, 433–455, and 461–483; these read FQCIECGRNFSWRSILTEHKRIH, YKCEECGKVFNRCSNLTKHKRIH, YKCDECGKVFNWWSQLTNHKKIH, YKCDECDKVFNWWSQLTSHKKIH, YPCEECGKAFTQFSNLTQHKRIH, YKCKECCKAFNKFSNLTQHKRIH, YKCEECGNVFNECSHLTRHRRIH, YKCEECGKAFTQFASLTRHKRIH, YQCEECGKTFNRCSHLSSHKRIH, YKCEECGRTFTQFSNLTQHKRIH, YKCKECGKAFNKFSSLTQHRRIH, YKCEECGKVFKQCSHLTSHKRIH, YKCKECGKAFYQSSILSKHKRIH, and YKCEECGKAFNQFSSLTRHKRIH. A C2H2-type 15; degenerate zinc finger spans residues 489–511; that stretch reads YKCKECGKGFYQSSIHSKYKRIY.

This sequence belongs to the krueppel C2H2-type zinc-finger protein family.

Its subcellular location is the nucleus. May be involved in transcriptional regulation. In Homo sapiens (Human), this protein is Zinc finger protein 678 (ZNF678).